Consider the following 37-residue polypeptide: Photosystem I reaction center subunit IX (37 aa).

The helical transmembrane segment at 4–24 (FLTTAPVVAAIWFTLTAGILI) threads the bilayer.

It belongs to the PsaJ family.

The protein localises to the cellular thylakoid membrane. Its function is as follows. May help in the organization of the PsaE and PsaF subunits. The chain is Photosystem I reaction center subunit IX from Synechococcus sp. (strain WH7803).